We begin with the raw amino-acid sequence, 701 residues long: Elongation factor G (701 aa).

The tr-type G domain occupies 8–290 (SLYRNIGISA…AVVELLPAPT (283 aa)). Residues 17 to 24 (AHIDAGKT), 88 to 92 (DTPGH), and 142 to 145 (NKMD) each bind GTP.

This sequence belongs to the TRAFAC class translation factor GTPase superfamily. Classic translation factor GTPase family. EF-G/EF-2 subfamily.

It localises to the cytoplasm. Its function is as follows. Catalyzes the GTP-dependent ribosomal translocation step during translation elongation. During this step, the ribosome changes from the pre-translocational (PRE) to the post-translocational (POST) state as the newly formed A-site-bound peptidyl-tRNA and P-site-bound deacylated tRNA move to the P and E sites, respectively. Catalyzes the coordinated movement of the two tRNA molecules, the mRNA and conformational changes in the ribosome. In Neisseria gonorrhoeae (strain ATCC 700825 / FA 1090), this protein is Elongation factor G.